Consider the following 324-residue polypeptide: tRNA(Ile)-lysidine synthase (324 aa).

ATP is bound at residue 33–38 (SGGPDS).

Belongs to the tRNA(Ile)-lysidine synthase family.

The protein localises to the cytoplasm. The enzyme catalyses cytidine(34) in tRNA(Ile2) + L-lysine + ATP = lysidine(34) in tRNA(Ile2) + AMP + diphosphate + H(+). Ligates lysine onto the cytidine present at position 34 of the AUA codon-specific tRNA(Ile) that contains the anticodon CAU, in an ATP-dependent manner. Cytidine is converted to lysidine, thus changing the amino acid specificity of the tRNA from methionine to isoleucine. In Thermobifida fusca (strain YX), this protein is tRNA(Ile)-lysidine synthase.